We begin with the raw amino-acid sequence, 395 residues long: Succinyl-diaminopimelate desuccinylase (395 aa).

Position 74 (H74) interacts with Zn(2+). D76 is a catalytic residue. D107 provides a ligand contact to Zn(2+). E141 serves as the catalytic Proton acceptor. E142, E170, and H368 together coordinate Zn(2+).

Belongs to the peptidase M20A family. DapE subfamily. As to quaternary structure, homodimer. Zn(2+) is required as a cofactor. Co(2+) serves as cofactor.

It carries out the reaction N-succinyl-(2S,6S)-2,6-diaminopimelate + H2O = (2S,6S)-2,6-diaminopimelate + succinate. The protein operates within amino-acid biosynthesis; L-lysine biosynthesis via DAP pathway; LL-2,6-diaminopimelate from (S)-tetrahydrodipicolinate (succinylase route): step 3/3. In terms of biological role, catalyzes the hydrolysis of N-succinyl-L,L-diaminopimelic acid (SDAP), forming succinate and LL-2,6-diaminopimelate (DAP), an intermediate involved in the bacterial biosynthesis of lysine and meso-diaminopimelic acid, an essential component of bacterial cell walls. The polypeptide is Succinyl-diaminopimelate desuccinylase (Brucella melitensis biotype 1 (strain ATCC 23456 / CCUG 17765 / NCTC 10094 / 16M)).